We begin with the raw amino-acid sequence, 327 residues long: D-alanine--D-alanine ligase (327 aa).

In terms of domain architecture, ATP-grasp spans 113–312 (KRLWMTYGLA…YEDFVMQVVA (200 aa)). An ATP-binding site is contributed by 139-194 (AADLGLPLIVKPAREGSSIGLTKVTAADQMRAAFEKAAALDNDVIAETFIDGAELT). Mg(2+)-binding residues include D266, E279, and N281.

This sequence belongs to the D-alanine--D-alanine ligase family. Requires Mg(2+) as cofactor. Mn(2+) serves as cofactor.

The protein resides in the cytoplasm. The catalysed reaction is 2 D-alanine + ATP = D-alanyl-D-alanine + ADP + phosphate + H(+). Its pathway is cell wall biogenesis; peptidoglycan biosynthesis. Cell wall formation. This is D-alanine--D-alanine ligase from Cupriavidus necator (strain ATCC 17699 / DSM 428 / KCTC 22496 / NCIMB 10442 / H16 / Stanier 337) (Ralstonia eutropha).